Reading from the N-terminus, the 271-residue chain is Phosphate import ATP-binding protein PstB 1 (271 aa).

In terms of domain architecture, ABC transporter spans 24 to 266 (MIGKDVSVYY…PDDPRTQDYI (243 aa)). ATP is bound at residue 56–63 (GPSGCGKS).

The protein belongs to the ABC transporter superfamily. Phosphate importer (TC 3.A.1.7) family. The complex is composed of two ATP-binding proteins (PstB), two transmembrane proteins (PstC and PstA) and a solute-binding protein (PstS).

It localises to the cell inner membrane. It catalyses the reaction phosphate(out) + ATP + H2O = ADP + 2 phosphate(in) + H(+). Part of the ABC transporter complex PstSACB involved in phosphate import. Responsible for energy coupling to the transport system. The polypeptide is Phosphate import ATP-binding protein PstB 1 (Rhizobium johnstonii (strain DSM 114642 / LMG 32736 / 3841) (Rhizobium leguminosarum bv. viciae)).